A 409-amino-acid chain; its full sequence is S-adenosylmethionine synthase (409 aa).

Residue histidine 15 participates in ATP binding. Mg(2+) is bound at residue aspartate 17. Glutamate 43 is a K(+) binding site. Residues glutamate 56 and glutamine 100 each contribute to the L-methionine site. The interval 100–110 is flexible loop; that stretch reads QSSDIAQGVNE. ATP-binding positions include 171–173, 248–249, aspartate 257, 263–264, alanine 280, and lysine 284; these read DGK, KF, and RK. An L-methionine-binding site is contributed by aspartate 257. Lysine 288 provides a ligand contact to L-methionine.

It belongs to the AdoMet synthase family. In terms of assembly, homotetramer; dimer of dimers. Requires Mg(2+) as cofactor. It depends on K(+) as a cofactor.

The protein localises to the cytoplasm. The enzyme catalyses L-methionine + ATP + H2O = S-adenosyl-L-methionine + phosphate + diphosphate. The protein operates within amino-acid biosynthesis; S-adenosyl-L-methionine biosynthesis; S-adenosyl-L-methionine from L-methionine: step 1/1. Catalyzes the formation of S-adenosylmethionine (AdoMet) from methionine and ATP. The overall synthetic reaction is composed of two sequential steps, AdoMet formation and the subsequent tripolyphosphate hydrolysis which occurs prior to release of AdoMet from the enzyme. The protein is S-adenosylmethionine synthase of Prochlorococcus marinus (strain NATL1A).